The chain runs to 110 residues: Parvalbumin alpha (110 aa).

Ser2 is modified (N-acetylserine). Ser2 and Ser24 each carry phosphoserine. EF-hand domains follow at residues 39-74 (KSADDVKKVFHMLDKDKSGFIEEDELGFILKGFSPD) and 78-110 (LSAKETKMLMAAGDKDGDGKIGVDEFSTLVAES). Ca(2+) contacts are provided by Asp52, Asp54, Ser56, Phe58, Glu60, Glu63, Asp91, Asp93, Asp95, Lys97, and Glu102.

Functionally, in muscle, parvalbumin is thought to be involved in relaxation after contraction. It binds two calcium ions. The protein is Parvalbumin alpha (PVALB) of Homo sapiens (Human).